Reading from the N-terminus, the 459-residue chain is Elongation factor 1-alpha 4 (459 aa).

A tr-type G domain is found at 5–242 (KTHINIVVIG…DCIIPPQRPT (238 aa)). The segment at 14 to 21 (GHVDSGKS) is G1. Residues 70–74 (GITID) form a G2 region. Residues 91–94 (DAPG) form a G3 region. The G4 stretch occupies residues 153–156 (NKMD). A G5 region spans residues 194-196 (SGF). Residues Glu301 and Glu374 each carry the 5-glutamyl glycerylphosphorylethanolamine modification.

It belongs to the TRAFAC class translation factor GTPase superfamily. Classic translation factor GTPase family. EF-Tu/EF-1A subfamily.

The protein resides in the cytoplasm. Its function is as follows. This protein promotes the GTP-dependent binding of aminoacyl-tRNA to the A-site of ribosomes during protein biosynthesis. This Oscheius tipulae protein is Elongation factor 1-alpha 4 (eft-4).